The sequence spans 288 residues: 33 kDa chaperonin (288 aa).

2 cysteine pairs are disulfide-bonded: Cys-233-Cys-235 and Cys-267-Cys-270.

This sequence belongs to the HSP33 family. Post-translationally, under oxidizing conditions two disulfide bonds are formed involving the reactive cysteines. Under reducing conditions zinc is bound to the reactive cysteines and the protein is inactive.

Its subcellular location is the cytoplasm. Redox regulated molecular chaperone. Protects both thermally unfolding and oxidatively damaged proteins from irreversible aggregation. Plays an important role in the bacterial defense system toward oxidative stress. The polypeptide is 33 kDa chaperonin (Actinobacillus succinogenes (strain ATCC 55618 / DSM 22257 / CCUG 43843 / 130Z)).